Reading from the N-terminus, the 423-residue chain is Zinc finger protein Gfi-1 (423 aa).

Residues 1–20 (MPRSFLVKSKKAHSYHQPRS) form an SNAG domain region. The segment at 1–102 (MPRSFLVKSK…PPSPSVSPAS (102 aa)) is disordered. Residues Ser-20 and Ser-57 each carry the phosphoserine modification. A compositionally biased stretch (basic and acidic residues) spans 48–57 (SKMEPRERLS). Positions 141 to 258 (RQCSALERSA…LLLGGGSYKC (118 aa)) are required for interaction with RELA. 6 consecutive C2H2-type zinc fingers follow at residues 256–279 (YKCI…RRSH), 285–307 (FACE…KAVH), 313–335 (FDCK…LLIH), 341–363 (YPCQ…TFIH), 369–391 (HKCQ…SRKH), and 397–420 (FGCD…ETQH).

Interacts with U2AF1L4. Component of RCOR-GFI-KDM1A-HDAC complexes. Interacts directly with RCOR1, KDM1A and HDAC2. Also interacts with HDAC1. regions. Interacts (via the zinc-finger domain) with ARIH2; the interaction prevents GFI1 ubiquitination and proteasomal degradation. Interacts with PIAS3; the interaction relieves the inhibitory effect of PIAS3 on STAT3-mediated transcriptional activity. Forms a complex with EHMT2 and HDAC1 to promote 'Lys-9' dimethylation of H3 (H3K9Me2) and repress expression of target genes. Interacts directly with EHMT2. Component of the GFI1-AJUBA-HDAC1 repressor complex. Interacts directly with AJUBA (via ITS LIM domains); the interaction results in the HDAC-dependent corepression of a subset of GFI1 target genes and, occurs independent of the SNAG domain. Interacts with SPI1; the interaction inhibits SPI1 transcriptional activity targeted at macrophage-specific genes, repressing macrophage differentiation of myeloid progenitor cells and promoting granulocyte commitment. Interacts with RUNX1T1; the interaction represses HDAC-mediated transcriptional activity. Interacts with RELA; the interaction occurs on liposaccharide (LPS) stimulation controls RELA DNA binding activity and regulates endotoxin-mediated TOLL-like receptor inflammatory response. Interacts (via the C-terminal zinc fingers) with ZBTB17; the interaction results in the recruitment of GFI1 to the CDKN1A/p21 promoter and repression of CDKN1A/p21 transcription. Post-translationally, ubiquitinated. As to expression, restricted to lymphoid tissues and testes in adult animals.

Its subcellular location is the nucleus. Its function is as follows. Transcription repressor essential for hematopoiesis. Functions in a cell-context and development-specific manner. Binds to 5'-TAAATCAC[AT]GCA-3' in the promoter region of a large number of genes. Component of several complexes, including the EHMT2-GFI1-HDAC1, AJUBA-GFI1-HDAC1 and RCOR-GFI-KDM1A-HDAC complexes, that suppress, via histone deacetylase (HDAC) recruitment, a number of genes implicated in multilineage blood cell development. Regulates neutrophil differentiation, promotes proliferation of lymphoid cells, and is required for granulocyte development. Inhibits SPI1 transcriptional activity at macrophage-specific genes, repressing macrophage differentiation of myeloid progenitor cells and promoting granulocyte commitment. Mediates, together with U2AF1L4, the alternative splicing of CD45 and controls T-cell receptor signaling. Regulates the endotoxin-mediated Toll-like receptor (TLR) inflammatory response by antagonizing RELA. Cooperates with CBFA2T2 to regulate ITGB1-dependent neurite growth. Controls cell-cycle progression by repressing CDKNIA/p21 transcription in response to TGFB1 via recruitment of GFI1 by ZBTB17 to the CDKNIA/p21 and CDKNIB promoters. Required for the maintenance of inner ear hair cells. In addition to its role in transcription, acts as a substrate adapter for PRMT1 in the DNA damage response: facilitates the recognition of TP53BP1 and MRE11 substrates by PRMT1, promoting their methylation and the DNA damage response. The chain is Zinc finger protein Gfi-1 (Gfi1) from Rattus norvegicus (Rat).